A 332-amino-acid polypeptide reads, in one-letter code: MKSSVPSLLFVSLVMSLNSYTQQVLYCPPDPAPENITEFVCNSPSLHEFPTGFPVRTKIISVEFTQVSSLGVEALQGLPNLQELHLSNNRLKTLPSGLFRNLPELHTLDLSTNLLEDLPPEIFTSTTSLTLLSISENRLAKLRLSWFETLKELRILSLDNNQLKEVPISCFDKLEKLTFLDLSSNHLHRLSPDMFSGLDNLERLSLENNPIRCIAPKSFHGRPKLSIISLKNCSLTNIITGVFQPLNHXVLLDLSDNELTMLDPPVAIPSANLSLDLTGNPWACNCRMDNLLTWVKEHKIDLYSKQEIVCAFPKSFKGEEATSLHRSQICPC.

An N-terminal signal peptide occupies residues 1–23 (MKSSVPSLLFVSLVMSLNSYTQQ). The N-linked (GlcNAc...) asparagine glycan is linked to Asn-35. LRR repeat units follow at residues 78–101 (LPNL…LFRN), 103–125 (PELH…IFTS), 127–149 (TSLT…WFET), 150–173 (LKEL…CFDK), 175–197 (EKLT…MFSG), 198–221 (LDNL…SFHG), 223–245 (PKLS…VFQP), and 247–269 (NHXV…VAIP). Asn-232 carries an N-linked (GlcNAc...) asparagine glycan. N-linked (GlcNAc...) asparagine glycosylation occurs at Asn-272. The region spanning 280 to 331 (NPWACNCRMDNLLTWVKEHKIDLYSKQEIVCAFPKSFKGEEATSLHRSQICP) is the LRRCT domain.

This sequence belongs to the beta-type phospholipase A2 inhibitor family. As to quaternary structure, homotrimer.

It is found in the secreted. Its function is as follows. Inhibits the enzymatic activity of the basic phospholipase A2 (PLA2). The polypeptide is Phospholipase A2 inhibitor beta (Elaphe climacophora (Japanese rat snake)).